Here is a 151-residue protein sequence, read N- to C-terminus: Transcription factor ATOH7 (151 aa).

A bHLH domain is found at 39-91 (KRRLAANARERRRMQGLNTAFDRLRKVVPQWGQDKKLSKYETLQMALSYIMAL).

Its subcellular location is the nucleus. It localises to the perikaryon. The protein localises to the cell projection. The protein resides in the axon. Transcription factor that binds to DNA at the consensus sequence 5'-CAG[GC]TG-3'. Positively regulates the determination of retinal ganglion cell fate and formation of the optic nerve and retino-hypothalamic tract. Required for retinal circadian rhythm photoentrainment. Plays a role in brainstem auditory signaling and binaural processing. During retinal neurogenesis, activates its own transcription, as well as the transcription of CHRNB3 and BRN3. This chain is Transcription factor ATOH7, found in Gallus gallus (Chicken).